The sequence spans 396 residues: 1-deoxy-D-xylulose 5-phosphate reductoisomerase (396 aa).

NADPH contacts are provided by Thr13, Gly14, Ser15, Ile16, and Asn127. Residue Lys128 participates in 1-deoxy-D-xylulose 5-phosphate binding. Position 129 (Glu129) interacts with NADPH. Asp153 contacts Mn(2+). The 1-deoxy-D-xylulose 5-phosphate site is built by Ser154, Glu155, Ser184, and His207. Glu155 lines the Mn(2+) pocket. Gly213 is a binding site for NADPH. Residues Ser220, Asn225, Lys226, and Glu229 each contribute to the 1-deoxy-D-xylulose 5-phosphate site. Mn(2+) is bound at residue Glu229.

Belongs to the DXR family. Mg(2+) is required as a cofactor. It depends on Mn(2+) as a cofactor.

It catalyses the reaction 2-C-methyl-D-erythritol 4-phosphate + NADP(+) = 1-deoxy-D-xylulose 5-phosphate + NADPH + H(+). It participates in isoprenoid biosynthesis; isopentenyl diphosphate biosynthesis via DXP pathway; isopentenyl diphosphate from 1-deoxy-D-xylulose 5-phosphate: step 1/6. Functionally, catalyzes the NADPH-dependent rearrangement and reduction of 1-deoxy-D-xylulose-5-phosphate (DXP) to 2-C-methyl-D-erythritol 4-phosphate (MEP). The protein is 1-deoxy-D-xylulose 5-phosphate reductoisomerase of Pseudomonas syringae pv. tomato (strain ATCC BAA-871 / DC3000).